The sequence spans 377 residues: Probable staphylococcal-like nuclease CAN3 (377 aa).

Gly2 carries the N-myristoyl glycine lipid modification. The S-palmitoyl cysteine moiety is linked to residue Cys7. The disordered stretch occupies residues 15 to 57 (GDHYPYYKPTSRPHYQPPHYHGQPAAPPAPPQQQPLGPHGVTP). A compositionally biased stretch (low complexity) spans 27 to 38 (PHYQPPHYHGQP). The 177-residue stretch at 177-353 (NTLPVYDKCI…KAANRGLWAS (177 aa)) folds into the TNase-like domain. Asp190 is a binding site for Ca(2+). Arg260 is an active-site residue. Asp265 contributes to the Ca(2+) binding site. Residues Glu268 and Arg302 contribute to the active site.

It belongs to the thermonuclease family. It depends on Ca(2+) as a cofactor.

The protein resides in the cell membrane. In terms of biological role, enzyme that catalyzes the hydrolysis of both DNA and RNA at the 5' position of the phosphodiester bond. In Oryza sativa subsp. japonica (Rice), this protein is Probable staphylococcal-like nuclease CAN3.